Reading from the N-terminus, the 308-residue chain is Cytochrome b (308 aa).

The next 4 helical transmembrane spans lie at 1–21 (SGSLLGMCLIVRIITGLFLAA), 45–66 (WLIRNLHANGASLFFICIYLHI), 81–101 (WNIGVILLLALMATAFVGYVL), and 146–166 (FFALHFLLPFVIAGLTLVHLT). H51 and H65 together coordinate heme b. Positions 150 and 164 each coordinate heme b. H169 contacts a ubiquinone. 3 helical membrane passes run 194–214 (TKDVLGFALLLTPLIALALFS), 256–276 (LGGVLALAASVLVLFLIPLLH), and 288–308 (LSQILFWALVANLLVLTWVGS).

Belongs to the cytochrome b family. The cytochrome bc1 complex contains 11 subunits: 3 respiratory subunits (MT-CYB, CYC1 and UQCRFS1), 2 core proteins (UQCRC1 and UQCRC2) and 6 low-molecular weight proteins (UQCRH/QCR6, UQCRB/QCR7, UQCRQ/QCR8, UQCR10/QCR9, UQCR11/QCR10 and a cleavage product of UQCRFS1). This cytochrome bc1 complex then forms a dimer. Requires heme b as cofactor.

It is found in the mitochondrion inner membrane. Its function is as follows. Component of the ubiquinol-cytochrome c reductase complex (complex III or cytochrome b-c1 complex) that is part of the mitochondrial respiratory chain. The b-c1 complex mediates electron transfer from ubiquinol to cytochrome c. Contributes to the generation of a proton gradient across the mitochondrial membrane that is then used for ATP synthesis. The protein is Cytochrome b (MT-CYB) of Garritornis isidorei (Papuan babbler).